A 497-amino-acid polypeptide reads, in one-letter code: Galactose/methyl galactoside import ATP-binding protein MglA 1 (497 aa).

2 ABC transporter domains span residues 6 to 243 (LEMR…VGRD) and 256 to 494 (GKVR…VMSM). Position 38-45 (38-45 (GENGAGKS)) interacts with ATP.

This sequence belongs to the ABC transporter superfamily. Galactose/methyl galactoside importer (TC 3.A.1.2.3) family. As to quaternary structure, the complex is composed of one ATP-binding protein (MglA), two transmembrane proteins (MglC) and a solute-binding protein (MglB).

The protein localises to the cell inner membrane. It carries out the reaction D-galactose(out) + ATP + H2O = D-galactose(in) + ADP + phosphate + H(+). The enzyme catalyses methyl beta-D-galactoside(out) + ATP + H2O = methyl beta-D-galactoside(in) + ADP + phosphate + H(+). Functionally, part of the ABC transporter complex MglABC involved in galactose/methyl galactoside import. Responsible for energy coupling to the transport system. In Photobacterium profundum (strain SS9), this protein is Galactose/methyl galactoside import ATP-binding protein MglA 1.